A 537-amino-acid chain; its full sequence is CTP synthase (537 aa).

An amidoligase domain region spans residues 1–265; that stretch reads MVHFIFVTGG…DNKVLKFFNI (265 aa). Serine 13 contacts CTP. Serine 13 lines the UTP pocket. Residues 14–19 and aspartate 71 contribute to the ATP site; that span reads SLGKGL. Aspartate 71 and glutamate 139 together coordinate Mg(2+). CTP-binding positions include 146 to 148 and lysine 222; that span reads DIE. UTP is bound at residue lysine 222. The Glutamine amidotransferase type-1 domain occupies 290-536; the sequence is RIAIIAKYHK…IKAAIEYNKC (247 aa). Glycine 352 contacts L-glutamine. Residue cysteine 379 is the Nucleophile; for glutamine hydrolysis of the active site. Residues 380–383, glutamate 403, and arginine 464 contribute to the L-glutamine site; that span reads FGMQ. Catalysis depends on residues histidine 509 and glutamate 511.

The protein belongs to the CTP synthase family. In terms of assembly, homotetramer.

It catalyses the reaction UTP + L-glutamine + ATP + H2O = CTP + L-glutamate + ADP + phosphate + 2 H(+). It carries out the reaction L-glutamine + H2O = L-glutamate + NH4(+). The enzyme catalyses UTP + NH4(+) + ATP = CTP + ADP + phosphate + 2 H(+). Its pathway is pyrimidine metabolism; CTP biosynthesis via de novo pathway; CTP from UDP: step 2/2. Its activity is regulated as follows. Allosterically activated by GTP, when glutamine is the substrate; GTP has no effect on the reaction when ammonia is the substrate. The allosteric effector GTP functions by stabilizing the protein conformation that binds the tetrahedral intermediate(s) formed during glutamine hydrolysis. Inhibited by the product CTP, via allosteric rather than competitive inhibition. In terms of biological role, catalyzes the ATP-dependent amination of UTP to CTP with either L-glutamine or ammonia as the source of nitrogen. Regulates intracellular CTP levels through interactions with the four ribonucleotide triphosphates. The polypeptide is CTP synthase (Rickettsia rickettsii (strain Iowa)).